The sequence spans 158 residues: NAD(P)H-quinone oxidoreductase subunit J, chloroplastic (158 aa).

It belongs to the complex I 30 kDa subunit family. As to quaternary structure, NDH is composed of at least 16 different subunits, 5 of which are encoded in the nucleus.

Its subcellular location is the plastid. The protein localises to the chloroplast thylakoid membrane. It carries out the reaction a plastoquinone + NADH + (n+1) H(+)(in) = a plastoquinol + NAD(+) + n H(+)(out). The enzyme catalyses a plastoquinone + NADPH + (n+1) H(+)(in) = a plastoquinol + NADP(+) + n H(+)(out). In terms of biological role, NDH shuttles electrons from NAD(P)H:plastoquinone, via FMN and iron-sulfur (Fe-S) centers, to quinones in the photosynthetic chain and possibly in a chloroplast respiratory chain. The immediate electron acceptor for the enzyme in this species is believed to be plastoquinone. Couples the redox reaction to proton translocation, and thus conserves the redox energy in a proton gradient. The chain is NAD(P)H-quinone oxidoreductase subunit J, chloroplastic from Illicium oligandrum (Star anise).